The sequence spans 95 residues: uncharacterized protein (95 aa).

This is an uncharacterized protein from Acidianus hospitalis (AFV-1).